The following is a 256-amino-acid chain: Thiazole synthase (256 aa).

Lys-96 functions as the Schiff-base intermediate with DXP in the catalytic mechanism. 1-deoxy-D-xylulose 5-phosphate is bound by residues Gly-157, 184–185 (AG), and 206–207 (NT).

It belongs to the ThiG family. In terms of assembly, homotetramer. Forms heterodimers with either ThiH or ThiS.

The protein resides in the cytoplasm. It catalyses the reaction [ThiS sulfur-carrier protein]-C-terminal-Gly-aminoethanethioate + 2-iminoacetate + 1-deoxy-D-xylulose 5-phosphate = [ThiS sulfur-carrier protein]-C-terminal Gly-Gly + 2-[(2R,5Z)-2-carboxy-4-methylthiazol-5(2H)-ylidene]ethyl phosphate + 2 H2O + H(+). Its pathway is cofactor biosynthesis; thiamine diphosphate biosynthesis. Catalyzes the rearrangement of 1-deoxy-D-xylulose 5-phosphate (DXP) to produce the thiazole phosphate moiety of thiamine. Sulfur is provided by the thiocarboxylate moiety of the carrier protein ThiS. In vitro, sulfur can be provided by H(2)S. This is Thiazole synthase from Brucella anthropi (strain ATCC 49188 / DSM 6882 / CCUG 24695 / JCM 21032 / LMG 3331 / NBRC 15819 / NCTC 12168 / Alc 37) (Ochrobactrum anthropi).